Here is a 206-residue protein sequence, read N- to C-terminus: Ribonuclease HII (206 aa).

Residues 27–206 (ARIAGVDEAG…CALHRRSFKH (180 aa)) enclose the RNase H type-2 domain. 3 residues coordinate a divalent metal cation: aspartate 33, glutamate 34, and aspartate 125.

It belongs to the RNase HII family. Mn(2+) serves as cofactor. Mg(2+) is required as a cofactor.

It is found in the cytoplasm. It carries out the reaction Endonucleolytic cleavage to 5'-phosphomonoester.. In terms of biological role, endonuclease that specifically degrades the RNA of RNA-DNA hybrids. This is Ribonuclease HII from Moorella thermoacetica (strain ATCC 39073 / JCM 9320).